We begin with the raw amino-acid sequence, 518 residues long: Lysine--tRNA ligase (518 aa).

Positions 407 and 414 each coordinate Mg(2+).

This sequence belongs to the class-II aminoacyl-tRNA synthetase family. As to quaternary structure, homodimer. Mg(2+) is required as a cofactor.

The protein localises to the cytoplasm. It catalyses the reaction tRNA(Lys) + L-lysine + ATP = L-lysyl-tRNA(Lys) + AMP + diphosphate. This Helicobacter hepaticus (strain ATCC 51449 / 3B1) protein is Lysine--tRNA ligase.